A 479-amino-acid polypeptide reads, in one-letter code: Ribosomal protein uS12 methylthiotransferase RimO (479 aa).

The tract at residues 1–34 is disordered; sequence MTVNTFDPSKASPVTHASDSASKTPEPNAVAAPS. Positions 15 to 25 are enriched in polar residues; sequence THASDSASKTP. The region spanning 39–151 is the MTTase N-terminal domain; that stretch reads NRVGFVSLGC…VMGAVHGYIP (113 aa). [4Fe-4S] cluster-binding residues include cysteine 48, cysteine 84, cysteine 113, cysteine 184, cysteine 188, and cysteine 191. The 238-residue stretch at 170-407 folds into the Radical SAM core domain; that stretch reads LTPRHYAYLK…METQQAISAA (238 aa). One can recognise a TRAM domain in the interval 410 to 476; the sequence is KQKVGYEMDV…DYDLTGIAVE (67 aa).

It belongs to the methylthiotransferase family. RimO subfamily. It depends on [4Fe-4S] cluster as a cofactor.

Its subcellular location is the cytoplasm. The enzyme catalyses L-aspartate(89)-[ribosomal protein uS12]-hydrogen + (sulfur carrier)-SH + AH2 + 2 S-adenosyl-L-methionine = 3-methylsulfanyl-L-aspartate(89)-[ribosomal protein uS12]-hydrogen + (sulfur carrier)-H + 5'-deoxyadenosine + L-methionine + A + S-adenosyl-L-homocysteine + 2 H(+). In terms of biological role, catalyzes the methylthiolation of an aspartic acid residue of ribosomal protein uS12. The chain is Ribosomal protein uS12 methylthiotransferase RimO from Saccharophagus degradans (strain 2-40 / ATCC 43961 / DSM 17024).